The primary structure comprises 344 residues: Arginine N-succinyltransferase (344 aa).

Leu-125 is a binding site for succinyl-CoA. His-229 serves as the catalytic Proton donor.

Belongs to the arginine N-succinyltransferase family.

It carries out the reaction succinyl-CoA + L-arginine = N(2)-succinyl-L-arginine + CoA + H(+). It functions in the pathway amino-acid degradation; L-arginine degradation via AST pathway; L-glutamate and succinate from L-arginine: step 1/5. Functionally, catalyzes the transfer of succinyl-CoA to arginine to produce N(2)-succinylarginine. This is Arginine N-succinyltransferase from Shigella flexneri serotype 5b (strain 8401).